A 288-amino-acid polypeptide reads, in one-letter code: Homoserine kinase (288 aa).

79-89 (PPARGLGSSSA) contacts ATP.

This sequence belongs to the GHMP kinase family. Homoserine kinase subfamily.

It is found in the cytoplasm. The enzyme catalyses L-homoserine + ATP = O-phospho-L-homoserine + ADP + H(+). It functions in the pathway amino-acid biosynthesis; L-threonine biosynthesis; L-threonine from L-aspartate: step 4/5. Catalyzes the ATP-dependent phosphorylation of L-homoserine to L-homoserine phosphate. The sequence is that of Homoserine kinase from Listeria monocytogenes serotype 4a (strain HCC23).